We begin with the raw amino-acid sequence, 583 residues long: uncharacterized protein (583 aa).

One can recognise an FAD-binding FR-type domain in the interval 162 to 424; sequence YGIFAAPILD…RGVQQNPFAK (263 aa).

This sequence belongs to the flavoprotein pyridine nucleotide cytochrome reductase family. Requires FAD as cofactor.

The protein resides in the mitochondrion. This is an uncharacterized protein from Schizosaccharomyces pombe (strain 972 / ATCC 24843) (Fission yeast).